The following is a 450-amino-acid chain: Putative zinc metalloprotease TP_0600 (450 aa).

Histidine 18 is a binding site for Zn(2+). The active site involves glutamate 19. Zn(2+) is bound at residue histidine 22. Residues 102 to 124 (IAFAGPLANVLMAVMVLALVSAL) form a helical membrane-spanning segment. One can recognise a PDZ domain in the interval 200–278 (TITPDRDAHT…SVVLTVLRSG (79 aa)). A run of 2 helical transmembrane segments spans residues 384 to 406 (VCVS…LILF) and 421 to 443 (VLYY…AFWN).

It belongs to the peptidase M50B family. Zn(2+) is required as a cofactor.

The protein resides in the cell inner membrane. The protein is Putative zinc metalloprotease TP_0600 of Treponema pallidum (strain Nichols).